The chain runs to 67 residues: Vespin (67 aa).

An N-terminal signal peptide occupies residues 1-21; the sequence is MHPIIWELSHMVDLQAAAQKL.

In terms of tissue distribution, expressed by the venom gland.

It localises to the secreted. Its function is as follows. Shows contractile activity on isolated ileum smooth muscle. The chain is Vespin from Vespa magnifica (Hornet).